Here is a 498-residue protein sequence, read N- to C-terminus: Glycerol kinase 1 (498 aa).

Position 12 (threonine 12) interacts with ADP. Positions 12, 13, and 14 each coordinate ATP. Threonine 12 is a sn-glycerol 3-phosphate binding site. Arginine 16 lines the ADP pocket. Residues arginine 82, glutamate 83, tyrosine 134, and aspartate 243 each coordinate sn-glycerol 3-phosphate. The glycerol site is built by arginine 82, glutamate 83, tyrosine 134, aspartate 243, and glutamine 244. Threonine 265 and glycine 308 together coordinate ADP. ATP contacts are provided by threonine 265, glycine 308, glutamine 312, and glycine 409. Glycine 409 and asparagine 413 together coordinate ADP.

Belongs to the FGGY kinase family. As to quaternary structure, homotetramer and homodimer (in equilibrium).

It carries out the reaction glycerol + ATP = sn-glycerol 3-phosphate + ADP + H(+). It functions in the pathway polyol metabolism; glycerol degradation via glycerol kinase pathway; sn-glycerol 3-phosphate from glycerol: step 1/1. Activated by phosphorylation and inhibited by fructose 1,6-bisphosphate (FBP). Key enzyme in the regulation of glycerol uptake and metabolism. Catalyzes the phosphorylation of glycerol to yield sn-glycerol 3-phosphate. This is Glycerol kinase 1 from Clostridium tetani (strain Massachusetts / E88).